The primary structure comprises 559 residues: Aspartokinase 3, chloroplastic (559 aa).

A chloroplast-targeting transit peptide spans 1–85; sequence MAASMQFYGV…LNKTEKKLTC (85 aa). 3 residues coordinate ATP: Lys88, Gly91, and Ser120. Glu204 is a substrate binding site. ACT domains are found at residues 402–480 and 481–559; these read ITST…SIIS and LIGN…AASS.

This sequence belongs to the aspartokinase family. As to expression, highly expressed in xylem of leaves and hypocotyls, stele of roots and in trichomes after bolting. Weak expression in veins and mesophyll cells of caulone leaves, inflorescence stems, sepals, petals and stigmata.

It is found in the plastid. Its subcellular location is the chloroplast. The catalysed reaction is L-aspartate + ATP = 4-phospho-L-aspartate + ADP. Its pathway is amino-acid biosynthesis; L-lysine biosynthesis via DAP pathway; (S)-tetrahydrodipicolinate from L-aspartate: step 1/4. It functions in the pathway amino-acid biosynthesis; L-methionine biosynthesis via de novo pathway; L-homoserine from L-aspartate: step 1/3. It participates in amino-acid biosynthesis; L-threonine biosynthesis; L-threonine from L-aspartate: step 1/5. Its activity is regulated as follows. Allosterically inhibited by lysine, but not by S-adenosyl-L-methionine (SAM). K(0.5) for lysine in the presence of physiological concentrations of substrates is 7.4 uM. No inhibition by threonine or leucine and no activation or inhibition by alanine, cysteine, isoleucine, serine, valine, methionine, glutamine, asparagine, glutamic acid or arginine. Its function is as follows. Involved in the first step of essential amino acids lysine, threonine, methionine and isoleucine synthesis via the aspartate-family pathway. The sequence is that of Aspartokinase 3, chloroplastic (AK3) from Arabidopsis thaliana (Mouse-ear cress).